The primary structure comprises 177 residues: Large ribosomal subunit protein uL6 (177 aa).

Position 44 is an N6-acetyllysine (K44).

The protein belongs to the universal ribosomal protein uL6 family. As to quaternary structure, part of the 50S ribosomal subunit.

Functionally, this protein binds to the 23S rRNA, and is important in its secondary structure. It is located near the subunit interface in the base of the L7/L12 stalk, and near the tRNA binding site of the peptidyltransferase center. The chain is Large ribosomal subunit protein uL6 from Escherichia fergusonii (strain ATCC 35469 / DSM 13698 / CCUG 18766 / IAM 14443 / JCM 21226 / LMG 7866 / NBRC 102419 / NCTC 12128 / CDC 0568-73).